The following is a 242-amino-acid chain: UPF0309 protein BH3325 (242 aa).

The region spanning 34-217 (VSEAVMNGGR…HLLVQQGFEP (184 aa)) is the SIS domain.

The protein belongs to the UPF0309 family.

This Halalkalibacterium halodurans (strain ATCC BAA-125 / DSM 18197 / FERM 7344 / JCM 9153 / C-125) (Bacillus halodurans) protein is UPF0309 protein BH3325.